The primary structure comprises 454 residues: Tryptophanase (454 aa).

The residue at position 256 (Lys256) is an N6-(pyridoxal phosphate)lysine.

This sequence belongs to the beta-eliminating lyase family. In terms of assembly, homotetramer. Requires pyridoxal 5'-phosphate as cofactor.

It catalyses the reaction L-tryptophan + H2O = indole + pyruvate + NH4(+). The protein operates within amino-acid degradation; L-tryptophan degradation via pyruvate pathway; indole and pyruvate from L-tryptophan: step 1/1. The chain is Tryptophanase (tnaA) from Rhodobacter capsulatus (Rhodopseudomonas capsulata).